The chain runs to 29 residues: Protein YldA (29 aa).

Residues 5–25 (FYILIGFLIMAAIIVMAVLYL) form a helical membrane-spanning segment.

Its subcellular location is the cell inner membrane. In Escherichia coli (strain K12), this protein is Protein YldA.